The following is a 957-amino-acid chain: Protein translocase subunit SecA (957 aa).

ATP contacts are provided by residues Gln-87, 105-109 (GEGKT), and Asp-512. The interval 924 to 957 (AAPAQAPSKSKRSAGRNDPCPCGSGQKYKKCCGK) is disordered. Positions 943, 945, 954, and 955 each coordinate Zn(2+).

This sequence belongs to the SecA family. Monomer and homodimer. Part of the essential Sec protein translocation apparatus which comprises SecA, SecYEG and auxiliary proteins SecDF-YajC and YidC. The cofactor is Zn(2+).

The protein resides in the cell inner membrane. Its subcellular location is the cytoplasm. It carries out the reaction ATP + H2O + cellular proteinSide 1 = ADP + phosphate + cellular proteinSide 2.. Its function is as follows. Part of the Sec protein translocase complex. Interacts with the SecYEG preprotein conducting channel. Has a central role in coupling the hydrolysis of ATP to the transfer of proteins into and across the cell membrane, serving as an ATP-driven molecular motor driving the stepwise translocation of polypeptide chains across the membrane. The sequence is that of Protein translocase subunit SecA from Geobacter sp. (strain M21).